A 930-amino-acid chain; its full sequence is Isoleucine--tRNA ligase (930 aa).

Positions 57–67 (PYANGNIHVGH) match the 'HIGH' region motif. An L-isoleucyl-5'-AMP-binding site is contributed by glutamate 554. The 'KMSKS' region motif lies at 595–599 (KMSKS). Lysine 598 contributes to the ATP binding site.

Belongs to the class-I aminoacyl-tRNA synthetase family. IleS type 1 subfamily. Monomer.

Its subcellular location is the cytoplasm. It catalyses the reaction tRNA(Ile) + L-isoleucine + ATP = L-isoleucyl-tRNA(Ile) + AMP + diphosphate. In terms of biological role, catalyzes the attachment of isoleucine to tRNA(Ile). As IleRS can inadvertently accommodate and process structurally similar amino acids such as valine, to avoid such errors it has two additional distinct tRNA(Ile)-dependent editing activities. One activity is designated as 'pretransfer' editing and involves the hydrolysis of activated Val-AMP. The other activity is designated 'posttransfer' editing and involves deacylation of mischarged Val-tRNA(Ile). The polypeptide is Isoleucine--tRNA ligase (Streptococcus agalactiae serotype Ia (strain ATCC 27591 / A909 / CDC SS700)).